A 356-amino-acid chain; its full sequence is Heparan sulfate 2-O-sulfotransferase 1 (356 aa).

Residues 1 to 11 (MGLLRIMMPPK) are Cytoplasmic-facing. The chain crosses the membrane as a helical; Signal-anchor for type II membrane protein span at residues 12-28 (LQLLAVVAFAVAMLFLE). The stretch at 24-51 (MLFLENQIQKLEESRSKLERAIARHEVR) forms a coiled coil. The Lumenal portion of the chain corresponds to 29–356 (NQIQKLEESR…FYEKIYPKSN (328 aa)). Adenosine 3',5'-bisphosphate contacts are provided by lysine 83, threonine 84, alanine 85, serine 86, threonine 87, and serine 88. N-linked (GlcNAc...) asparagine glycans are attached at residues asparagine 108 and asparagine 127. Catalysis depends on residues histidine 140 and histidine 142. Residues arginine 164 and serine 172 each coordinate adenosine 3',5'-bisphosphate. Cystine bridges form between cysteine 201/cysteine 209 and cysteine 222/cysteine 228. Positions 279, 285, 290, and 293 each coordinate adenosine 3',5'-bisphosphate.

Belongs to the sulfotransferase 3 family. Homotrimer. Interacts with the C5-epimerase GLCE. N-glycosylated.

It is found in the golgi apparatus membrane. Catalyzes the transfer of a sulfo group from 3'-phospho-5'-adenylyl sulfate (PAPS) to the 2-OH position of iduronic acid (IdoA) or glucuronic acid (GlcA) within the heparan sulfate (HS) chain and participates in HS biosynthesis. Required for metanephric development of kidney formation, suggesting that 2-O-sulfation within HS is essential for signaling between ureteric bud and metanephric mesenchyme. This Homo sapiens (Human) protein is Heparan sulfate 2-O-sulfotransferase 1.